We begin with the raw amino-acid sequence, 210 residues long: T-cell antigen CD7 (210 aa).

Positions 1–23 (MTQQAVLALLLTLAGILPGPLDA) are cleaved as a signal peptide. Residues 24-129 (QDVHQSPRLT…RGLFTTVVVK (106 aa)) enclose the Ig-like domain. Residues 24–150 (QDVHQSPRLT…EPLQTSFSFP (127 aa)) lie on the Extracellular side of the membrane. N-linked (GlcNAc...) asparagine glycosylation is found at asparagine 42, asparagine 86, and asparagine 93. A disulfide bridge links cysteine 45 with cysteine 111. The chain crosses the membrane as a helical span at residues 151–171 (AAIAVGFFFTGLLLGVVCSML). Cysteine 168 carries S-palmitoyl cysteine lipidation. Residues 172–210 (RKIQIKKLCASGIKESPCVVYEDMSYSNRKTPCIPNQYQ) lie on the Cytoplasmic side of the membrane.

As to quaternary structure, interacts with SECTM1.

It localises to the membrane. Transmembrane glycoprotein expressed by T-cells and natural killer (NK) cells and their precursors. Plays a costimulatory role in T-cell activation upon binding to its ligand K12/SECTM1. In turn, mediates the production of cytokines such as IL-2. On resting NK-cells, CD7 activation results in a significant induction of gamma-interferon levels. In Mus musculus (Mouse), this protein is T-cell antigen CD7 (Cd7).